The primary structure comprises 50 residues: C-C motif chemokine 5 (50 aa).

Belongs to the intercrine beta (chemokine CC) family.

It localises to the secreted. Chemoattractant for blood monocytes, memory T-helper cells and eosinophils. Causes the release of histamine from basophils and activates eosinophils. May activate several chemokine receptors including CCR1, CCR3, CCR4 and CCR5. May also be an agonist of the G protein-coupled receptor GPR75. Together with GPR75, may play a role in neuron survival through activation of a downstream signaling pathway involving the PI3, Akt and MAP kinases. By activating GPR75 may also play a role in insulin secretion by islet cells. The sequence is that of C-C motif chemokine 5 (CCL5) from Sus scrofa (Pig).